Reading from the N-terminus, the 356-residue chain is Histidinol-phosphate aminotransferase 2 (356 aa).

Lys214 carries the N6-(pyridoxal phosphate)lysine modification.

It belongs to the class-II pyridoxal-phosphate-dependent aminotransferase family. Histidinol-phosphate aminotransferase subfamily. In terms of assembly, homodimer. Pyridoxal 5'-phosphate serves as cofactor.

The enzyme catalyses L-histidinol phosphate + 2-oxoglutarate = 3-(imidazol-4-yl)-2-oxopropyl phosphate + L-glutamate. It participates in amino-acid biosynthesis; L-histidine biosynthesis; L-histidine from 5-phospho-alpha-D-ribose 1-diphosphate: step 7/9. The polypeptide is Histidinol-phosphate aminotransferase 2 (Dechloromonas aromatica (strain RCB)).